The chain runs to 496 residues: Thiamine transporter 2 (496 aa).

At 1–7 the chain is on the cytoplasmic side; sequence MDCYRTS. A helical membrane pass occupies residues 8 to 28; that stretch reads PSNSWIYTTVILCIFGFFSMM. Residues 29-53 lie on the Extracellular side of the membrane; the sequence is RPSEPFLIPYLSGPDKNLTSEEMTN. A glycan (N-linked (GlcNAc...) asparagine) is linked at N45. Residues 54–74 form a helical membrane-spanning segment; that stretch reads EIFPVWTYSYLVLLLPVLVLT. The Cytoplasmic portion of the chain corresponds to 75–81; sequence DYVRYKP. Residues 82-102 traverse the membrane as a helical segment; the sequence is VIILQGISFIITWLLLLFGQG. Residues 103-110 lie on the Extracellular side of the membrane; it reads VKTMQVVE. A helical membrane pass occupies residues 111-131; it reads FFYGMVTATEVAYYAYIYSVV. Residues 132–144 are Cytoplasmic-facing; it reads SPEHYQRVSGYCR. The helical transmembrane segment at 145-165 threads the bilayer; the sequence is SVTLVAYTAGSVLAQLLVSLA. N166 carries N-linked (GlcNAc...) asparagine glycosylation. The Extracellular portion of the chain corresponds to 166-169; the sequence is NLSY. A helical membrane pass occupies residues 170–190; sequence FYLNVISLASVSVAFLFSLFL. Residues 191–282 are Cytoplasmic-facing; the sequence is PMPKKSMFFH…YSSKRLFYWS (92 aa). Positions 210 to 248 are disordered; it reads SSSVNPVLEETHEGEAPDCEKQKPTSEIPSTSGKLHKGQ. Residues 218–233 are compositionally biased toward basic and acidic residues; it reads EETHEGEAPDCEKQKP. The span at 234 to 248 shows a compositional bias: polar residues; the sequence is TSEIPSTSGKLHKGQ. A helical transmembrane segment spans residues 283–303; sequence LWWAFATAGFNQILNYVQILW. The Extracellular portion of the chain corresponds to 304–316; that stretch reads DYKSPSQDSSIYN. Residues 317–337 form a helical membrane-spanning segment; the sequence is GAVEATATFGGAVAAFAVGYV. At 338-342 the chain is on the cytoplasmic side; that stretch reads KVNWD. The helical transmembrane segment at 343 to 363 threads the bilayer; that stretch reads LLGELALAVFSVVNAGSLFLM. Residues 364–375 lie on the Extracellular side of the membrane; the sequence is HYTANIWACYAG. A helical transmembrane segment spans residues 376–396; it reads YLIFKSSYMLLITIAVFQIAV. The Cytoplasmic portion of the chain corresponds to 397–405; that stretch reads NLSVERYAL. A helical membrane pass occupies residues 406 to 426; that stretch reads VFGINTFIALVIQTIITVIVV. The Extracellular portion of the chain corresponds to 427-434; sequence DQRGLNLP. Residues 435–455 traverse the membrane as a helical segment; it reads ISIQFLVYGSYFAVIAGIFLM. Residues 456 to 496 are Cytoplasmic-facing; the sequence is RSMYIIYSTKSQKDVQSPAPSENPDMSHPEEESNAIMSTKL. Positions 469–496 are disordered; the sequence is DVQSPAPSENPDMSHPEEESNAIMSTKL.

This sequence belongs to the reduced folate carrier (RFC) transporter (TC 2.A.48) family.

It is found in the membrane. It catalyses the reaction thiamine(out) + H(+)(in) = thiamine(in) + H(+)(out). It carries out the reaction pyridoxine(out) + n H(+)(out) = pyridoxine(in) + n H(+)(in). In terms of biological role, mediates high affinity thiamine uptake, probably via a proton anti-port mechanism. Has no folate transport activity. Mediates H(+)-dependent pyridoxine transport. The protein is Thiamine transporter 2 (SLC19A3) of Macaca fascicularis (Crab-eating macaque).